The sequence spans 255 residues: tRNA pseudouridine synthase A (255 aa).

Asp-60 serves as the catalytic Nucleophile. Tyr-118 serves as a coordination point for substrate.

This sequence belongs to the tRNA pseudouridine synthase TruA family. Homodimer.

The enzyme catalyses uridine(38/39/40) in tRNA = pseudouridine(38/39/40) in tRNA. Formation of pseudouridine at positions 38, 39 and 40 in the anticodon stem and loop of transfer RNAs. This chain is tRNA pseudouridine synthase A, found in Leuconostoc mesenteroides subsp. mesenteroides (strain ATCC 8293 / DSM 20343 / BCRC 11652 / CCM 1803 / JCM 6124 / NCDO 523 / NBRC 100496 / NCIMB 8023 / NCTC 12954 / NRRL B-1118 / 37Y).